The primary structure comprises 487 residues: Epstein-Barr nuclear antigen 2 (487 aa).

The tract at residues 1–210 is SMARCB1/INI1 binding; the sequence is MPTFYLALHG…TPPTPLPPAT (210 aa). Disordered regions lie at residues 52–121 and 258–487; these read VGEN…LGYD and SMHP…PSIQ. Positions 58–100 are enriched in pro residues; the sequence is VPPPLPPPPPPPPPPPPPPPPPPPPPPPPPPSPPPPPPPPPPP. The segment covering 101–118 has biased composition (basic and acidic residues); it reads QRRDAWTQEPSPLDRDPL. Pro residues-rich tracts occupy residues 286–307 and 319–333; these read PPMP…PPPG and SGPP…PPQP. Positions 344–366 are enriched in basic residues; it reads SRGRGRGRGRGRGKGKSRDKQRK. Tandem repeats lie at residues 345–346, 347–348, 349–350, 351–352, 353–354, 355–356, and 357–358. The interval 345-358 is 6.5 X 2 AA tandem repeats of R-G; that stretch reads RGRGRGRGRGRGKG. Short sequence motifs (PXLXP motif, interaction with host ZMYND11) lie at residues 383-387 and 437-441; these read PELSP and PILFP.

This sequence belongs to the herpesviridae EBNA2 family. Interacts with human SMARCB1/INI1, presumably generating an open chromatin conformation at the EBNA2-responsive target genes. Interacts with human WAPL. Interacts with host CBF1; this interaction allows transcriptional activation by EBNA2. Interacts with host general transcription factors GTF2B, ERCC2 and ERCC3. Interacts (via PXLXP motif) with host ZMYND11/BS69 (via MYND-type zinc finger). Interacts with host EBF1. Post-translationally, phosphorylated.

It localises to the host nucleus matrix. Its function is as follows. Plays a key role in the activation of the host resting B-cell and stimulation of B-cell proliferation. Acts by up-regulating the expression of viral EBNA1-6, LMP1, LMP2A and LMP2B genes, as well as several host genes including CD21, CD23 and MYC. Activates transcription by acting as an adapter molecule that binds to cellular sequence-specific DNA-binding proteins such as host CBF1, SMARCB1 and SPI1. Once EBNA2 is near promoter sites, its acidic activating domain recruits basal and activation-associated transcription factors TFIIB, TAF40, TFIIH components ERCC2 and ERCC3, and CBP in order to promote transcription. Alternatively, EBNA2 can affect activities of cell cycle regulators and retard cell cycle progression at G2/M phase. It also induces chromosomal instability, by disrupting mitotic checkpoints, multi-nucleation and formation of micronuclei in infected cells. This is Epstein-Barr nuclear antigen 2 (EBNA2) from Homo sapiens (Human).